The chain runs to 779 residues: Probable glutamine--tRNA ligase (779 aa).

Residues 268–270 (EPN) and 274–280 (HIGHAKA) contribute to the ATP site. Asp300 and Tyr440 together coordinate L-glutamine. Residues Thr459, 488–489 (RL), and 496–498 (LSK) contribute to the ATP site.

Belongs to the class-I aminoacyl-tRNA synthetase family.

It carries out the reaction tRNA(Gln) + L-glutamine + ATP = L-glutaminyl-tRNA(Gln) + AMP + diphosphate. The sequence is that of Probable glutamine--tRNA ligase (glnS) from Dictyostelium discoideum (Social amoeba).